The following is a 238-amino-acid chain: Type III pantothenate kinase (238 aa).

6–13 (DSGNTRIK) lines the ATP pocket. Residues Tyr90 and 97-100 (GVDR) each bind substrate. Asp99 functions as the Proton acceptor in the catalytic mechanism. Residue Thr122 coordinates ATP. Thr172 contacts substrate.

The protein belongs to the type III pantothenate kinase family. As to quaternary structure, homodimer. Requires NH4(+) as cofactor. K(+) is required as a cofactor.

Its subcellular location is the cytoplasm. It catalyses the reaction (R)-pantothenate + ATP = (R)-4'-phosphopantothenate + ADP + H(+). It participates in cofactor biosynthesis; coenzyme A biosynthesis; CoA from (R)-pantothenate: step 1/5. In terms of biological role, catalyzes the phosphorylation of pantothenate (Pan), the first step in CoA biosynthesis. The chain is Type III pantothenate kinase from Dechloromonas aromatica (strain RCB).